The sequence spans 311 residues: Methionyl-tRNA formyltransferase (311 aa).

Residue Ser-110–Pro-113 participates in (6S)-5,6,7,8-tetrahydrofolate binding.

Belongs to the Fmt family.

It carries out the reaction L-methionyl-tRNA(fMet) + (6R)-10-formyltetrahydrofolate = N-formyl-L-methionyl-tRNA(fMet) + (6S)-5,6,7,8-tetrahydrofolate + H(+). Attaches a formyl group to the free amino group of methionyl-tRNA(fMet). The formyl group appears to play a dual role in the initiator identity of N-formylmethionyl-tRNA by promoting its recognition by IF2 and preventing the misappropriation of this tRNA by the elongation apparatus. This is Methionyl-tRNA formyltransferase from Streptococcus gordonii (strain Challis / ATCC 35105 / BCRC 15272 / CH1 / DL1 / V288).